The sequence spans 422 residues: 2-oxoglutarate and iron-dependent oxygenase JMJD4 (422 aa).

The 160-residue stretch at 139–298 (QRNFPEHNIY…IMWQFLQDEL (160 aa)) folds into the JmjC domain. Residues H186, D188, and H266 each coordinate Fe cation.

Belongs to the JMJD6 family. Fe(2+) serves as cofactor.

The protein resides in the cytoplasm. The catalysed reaction is L-lysyl-[protein] + 2-oxoglutarate + O2 = 4-hydroxy-L-lysyl-[protein] + succinate + CO2. In terms of biological role, catalyzes the 2-oxoglutarate and iron-dependent C4-lysyl hydroxylation of ETF1 at 'Lys-63' thereby promoting the translational termination efficiency of ETF1. The polypeptide is 2-oxoglutarate and iron-dependent oxygenase JMJD4 (jmjd4) (Danio rerio (Zebrafish)).